We begin with the raw amino-acid sequence, 330 residues long: T-cell leukemia homeobox protein 1 (330 aa).

Residues 186 to 207 (DRFTGHPYQNRTPPKKKKPRTS) form a disordered region. Positions 201 to 260 (KKKPRTSFTRLQICELEKRFHRQKYLASAERAALAKALKMTDAQVKTWFQNRRTKWRRQT) form a DNA-binding region, homeobox. At Lys-236 the chain carries N6-acetyllysine.

Interacts with MEIS1, MEIS2, PBX1, PBX2 and PBX3.

The protein resides in the nucleus. Functionally, controls the genesis of the spleen. Binds to the DNA sequence 5'-GGCGGTAAGTGG-3'. In Homo sapiens (Human), this protein is T-cell leukemia homeobox protein 1 (TLX1).